Consider the following 1309-residue polypeptide: Nuclear pore complex protein NUP1 (1309 aa).

Disordered stretches follow at residues 1 to 58 (MASA…GGGW), 83 to 118 (RKRL…HKED), 173 to 210 (AADS…GSMN), 266 to 296 (RTPF…VTPR), 329 to 348 (SKWE…SGLK), 384 to 417 (ESPL…NLVP), 467 to 538 (LGNL…EEHP), 594 to 617 (SEAM…NGSL), and 635 to 680 (SNMA…VFPN). A 25 X 2 AA repeats of F-G region spans residues 2–677 (ASAARGESSN…LEEPKKPAAV (676 aa)). Basic residues predominate over residues 22-32 (KFRKPTARRSQ). Over residues 47 to 58 (GLGGGDVRGGGW) the composition is skewed to gly residues. The segment covering 91 to 101 (TPLQSPEQQKQ) has biased composition (polar residues). Over residues 195–204 (PSHERDRTHP) the composition is skewed to basic and acidic residues. Positions 268–283 (PFPQKSPTMSLVTKPS) are enriched in polar residues. The segment covering 396-405 (KTTHTSKDSA) has biased composition (basic and acidic residues). Polar residues-rich tracts occupy residues 597-617 (MPST…NGSL) and 635-659 (SNMA…SGKP). Basic and acidic residues predominate over residues 660-673 (TSEEKRIPLEEPKK). Repeat unit 1 spans residues 711–712 (FG). Residues 719–865 (KPTESKKTFS…VKNATFGNTS (147 aa)) form a disordered region. 2 stretches are compositionally biased toward low complexity: residues 728-741 (SNSA…TSAA) and 767-783 (SSPS…SDNS). A compositionally biased stretch (polar residues) spans 789–803 (STVQSFAATHNSSSI). Copy 2 of the repeat occupies 804–805 (FG). A compositionally biased stretch (low complexity) spans 809 to 827 (TSNDSNSQSTSASPLSSTS). 12 consecutive repeat copies span residues 831 to 832 (FG), 861 to 862 (FG), 869 to 870 (FG), 883 to 884 (FG), 898 to 899 (FG), 927 to 928 (FG), 956 to 957 (FG), 983 to 984 (FG), 1004 to 1005 (FG), 1029 to 1030 (FG), 1038 to 1039 (FG), and 1053 to 1054 (FG). The segment covering 1004-1023 (FGAGNAQTGNTGSGTTTSTQ) has biased composition (low complexity). Residues 1004 to 1028 (FGAGNAQTGNTGSGTTTSTQSIPFQ) are disordered. Residues 1068 to 1086 (TPQLSSTNSSASSSSTMSS) are compositionally biased toward low complexity. The interval 1068–1105 (TPQLSSTNSSASSSSTMSSPLFGTSWQAPNSSPNSGPV) is disordered. Repeat unit 15 spans residues 1089-1090 (FG). Residues 1096-1105 (PNSSPNSGPV) show a composition bias toward low complexity. Repeat copies occupy residues 1121-1122 (FG), 1137-1138 (FG), 1151-1152 (FG), 1153-1154 (FG), 1166-1167 (FG), 1177-1178 (FG), 1186-1187 (FG), 1224-1225 (FG), 1238-1239 (FG), and 1255-1256 (FG). A disordered region spans residues 1278–1309 (FQGGGSFSLGSTGGGDKSGRRIFKAKKSTRKK). A compositionally biased stretch (gly residues) spans 1279-1293 (QGGGSFSLGSTGGGD). Basic residues predominate over residues 1297 to 1309 (RRIFKAKKSTRKK).

As to quaternary structure, part of the nuclear pore complex (NPC). The NPC has an eight-fold symmetrical structure comprising a central transport channel and two rings, the cytoplasmic and nuclear rings, to which eight filaments are attached. The cytoplasmic filaments have loose ends, while the nuclear filaments are joined in a distal ring, forming a nuclear basket. NPCs are highly dynamic in configuration and composition, and can be devided in 3 subcomplexes, the NUP62 subcomplex, the NUP107-160 subcomplex and the NUP93 subcomplex, containing approximately 30 different nucleoporin proteins. Interacts with EER5, anchoring the TREX-2 complex on the nuclear pore complex. Interacts with UCH1 and UCH2.

The protein resides in the nucleus envelope. Its subcellular location is the nucleus. The protein localises to the nuclear pore complex. It is found in the cytoplasm. It localises to the cytosol. Its function is as follows. Nucleoporin required for nuclear mRNA export. Functions as an adapter and/or regulator molecule in the periphery of the nuclear pore complex (NPC). May interact with importin proteins and mediate active nucleocytoplasmic transport through the NPC. Involved in regulation of nuclear morphology. The protein is Nuclear pore complex protein NUP1 of Arabidopsis thaliana (Mouse-ear cress).